The primary structure comprises 645 residues: Putative bifunctional exonuclease/endonuclease protein MT2247 (645 aa).

The Exonuclease domain maps to Val-44–Leu-207. The GIY-YIG domain occupies His-248–Arg-326. The segment at Trp-603–Gly-645 is disordered. Positions Leu-635–Gly-645 are enriched in low complexity.

This Mycobacterium tuberculosis (strain CDC 1551 / Oshkosh) protein is Putative bifunctional exonuclease/endonuclease protein MT2247.